The chain runs to 479 residues: Proline--tRNA ligase (479 aa).

Belongs to the class-II aminoacyl-tRNA synthetase family. ProS type 3 subfamily. In terms of assembly, homodimer.

It localises to the cytoplasm. The enzyme catalyses tRNA(Pro) + L-proline + ATP = L-prolyl-tRNA(Pro) + AMP + diphosphate. Its function is as follows. Catalyzes the attachment of proline to tRNA(Pro) in a two-step reaction: proline is first activated by ATP to form Pro-AMP and then transferred to the acceptor end of tRNA(Pro). In Mesomycoplasma hyopneumoniae (strain 7448) (Mycoplasma hyopneumoniae), this protein is Proline--tRNA ligase.